An 88-amino-acid chain; its full sequence is Small ribosomal subunit protein uS15 (88 aa).

The protein belongs to the universal ribosomal protein uS15 family. As to quaternary structure, part of the 30S ribosomal subunit. Forms a bridge to the 50S subunit in the 70S ribosome, contacting the 23S rRNA.

Its function is as follows. One of the primary rRNA binding proteins, it binds directly to 16S rRNA where it helps nucleate assembly of the platform of the 30S subunit by binding and bridging several RNA helices of the 16S rRNA. In terms of biological role, forms an intersubunit bridge (bridge B4) with the 23S rRNA of the 50S subunit in the ribosome. The sequence is that of Small ribosomal subunit protein uS15 from Francisella tularensis subsp. novicida (strain U112).